The following is a 395-amino-acid chain: Succinyl-diaminopimelate desuccinylase (395 aa).

His-74 serves as a coordination point for Zn(2+). Asp-76 is a catalytic residue. Zn(2+) is bound at residue Asp-107. Glu-141 functions as the Proton acceptor in the catalytic mechanism. Residues Glu-142, Glu-170, and His-368 each contribute to the Zn(2+) site.

The protein belongs to the peptidase M20A family. DapE subfamily. As to quaternary structure, homodimer. The cofactor is Zn(2+). Co(2+) is required as a cofactor.

It catalyses the reaction N-succinyl-(2S,6S)-2,6-diaminopimelate + H2O = (2S,6S)-2,6-diaminopimelate + succinate. The protein operates within amino-acid biosynthesis; L-lysine biosynthesis via DAP pathway; LL-2,6-diaminopimelate from (S)-tetrahydrodipicolinate (succinylase route): step 3/3. Catalyzes the hydrolysis of N-succinyl-L,L-diaminopimelic acid (SDAP), forming succinate and LL-2,6-diaminopimelate (DAP), an intermediate involved in the bacterial biosynthesis of lysine and meso-diaminopimelic acid, an essential component of bacterial cell walls. This is Succinyl-diaminopimelate desuccinylase from Brucella canis (strain ATCC 23365 / NCTC 10854 / RM-666).